Consider the following 176-residue polypeptide: Ribosome rescue factor SmrB (176 aa).

Positions 93 to 168 (LDLHGYRQSE…GDAALLVLID (76 aa)) constitute a Smr domain.

The protein belongs to the SmrB family. In terms of assembly, associates with collided ribosomes, but not with correctly translating polysomes.

Its function is as follows. Acts as a ribosome collision sensor. Detects stalled/collided disomes (pairs of ribosomes where the leading ribosome is stalled and a second ribosome has collided with it) and endonucleolytically cleaves mRNA at the 5' boundary of the stalled ribosome. Stalled/collided disomes form a new interface (primarily via the 30S subunits) that binds SmrB. Cleaved mRNA becomes available for tmRNA ligation, leading to ribosomal subunit dissociation and rescue of stalled ribosomes. In Shewanella baltica (strain OS155 / ATCC BAA-1091), this protein is Ribosome rescue factor SmrB.